The sequence spans 498 residues: Cobyric acid synthase (498 aa).

Positions 257–447 (DLEIAVLRLP…LHGLLDNGPW (191 aa)) constitute a GATase cobBQ-type domain. The active-site Nucleophile is the cysteine 338. Histidine 439 is an active-site residue.

It belongs to the CobB/CobQ family. CobQ subfamily.

It participates in cofactor biosynthesis; adenosylcobalamin biosynthesis. Functionally, catalyzes amidations at positions B, D, E, and G on adenosylcobyrinic A,C-diamide. NH(2) groups are provided by glutamine, and one molecule of ATP is hydrogenolyzed for each amidation. This Synechococcus sp. (strain CC9605) protein is Cobyric acid synthase.